The sequence spans 283 residues: 4-diphosphocytidyl-2-C-methyl-D-erythritol kinase (283 aa).

The active site involves lysine 10. An ATP-binding site is contributed by 99–109 (PMGGGLGGGSS). The active site involves aspartate 141.

This sequence belongs to the GHMP kinase family. IspE subfamily. Homodimer.

It catalyses the reaction 4-CDP-2-C-methyl-D-erythritol + ATP = 4-CDP-2-C-methyl-D-erythritol 2-phosphate + ADP + H(+). It participates in isoprenoid biosynthesis; isopentenyl diphosphate biosynthesis via DXP pathway; isopentenyl diphosphate from 1-deoxy-D-xylulose 5-phosphate: step 3/6. Catalyzes the phosphorylation of the position 2 hydroxy group of 4-diphosphocytidyl-2C-methyl-D-erythritol. The chain is 4-diphosphocytidyl-2-C-methyl-D-erythritol kinase from Escherichia coli O7:K1 (strain IAI39 / ExPEC).